Consider the following 298-residue polypeptide: Nucleotide-binding protein Dred_3054 (298 aa).

An ATP-binding site is contributed by Gly20 to Thr27. Asp71 to Gly74 lines the GTP pocket.

It belongs to the RapZ-like family.

Functionally, displays ATPase and GTPase activities. In Desulforamulus reducens (strain ATCC BAA-1160 / DSM 100696 / MI-1) (Desulfotomaculum reducens), this protein is Nucleotide-binding protein Dred_3054.